A 689-amino-acid polypeptide reads, in one-letter code: Glycine--tRNA ligase beta subunit (689 aa).

This sequence belongs to the class-II aminoacyl-tRNA synthetase family. Tetramer of two alpha and two beta subunits.

It localises to the cytoplasm. It catalyses the reaction tRNA(Gly) + glycine + ATP = glycyl-tRNA(Gly) + AMP + diphosphate. This is Glycine--tRNA ligase beta subunit from Escherichia coli O139:H28 (strain E24377A / ETEC).